The primary structure comprises 500 residues: ATP synthase subunit alpha (500 aa).

167-174 provides a ligand contact to ATP; sequence GDRQTGKT.

This sequence belongs to the ATPase alpha/beta chains family. As to quaternary structure, F-type ATPases have 2 components, CF(1) - the catalytic core - and CF(0) - the membrane proton channel. CF(1) has five subunits: alpha(3), beta(3), gamma(1), delta(1), epsilon(1). CF(0) has three main subunits: a(1), b(2) and c(9-12). The alpha and beta chains form an alternating ring which encloses part of the gamma chain. CF(1) is attached to CF(0) by a central stalk formed by the gamma and epsilon chains, while a peripheral stalk is formed by the delta and b chains.

The protein localises to the cell inner membrane. The catalysed reaction is ATP + H2O + 4 H(+)(in) = ADP + phosphate + 5 H(+)(out). Functionally, produces ATP from ADP in the presence of a proton gradient across the membrane. The alpha chain is a regulatory subunit. The chain is ATP synthase subunit alpha from Wolinella succinogenes (strain ATCC 29543 / DSM 1740 / CCUG 13145 / JCM 31913 / LMG 7466 / NCTC 11488 / FDC 602W) (Vibrio succinogenes).